The primary structure comprises 343 residues: Probable beta-1,3-galactosyltransferase 13 (343 aa).

Residues 22 to 42 form a helical; Signal-anchor for type II membrane protein membrane-spanning segment; that stretch reads LIVFTSLAIGLTGFLFGLSTI. The N-linked (GlcNAc...) asparagine glycan is linked to N265.

The protein belongs to the glycosyltransferase 31 family. It depends on Mn(2+) as a cofactor.

The protein resides in the golgi apparatus membrane. It functions in the pathway protein modification; protein glycosylation. In terms of biological role, beta-1,3-galactosyltransferase that transfers galactose from UDP-galactose to substrates with a terminal glycosyl residue. The chain is Probable beta-1,3-galactosyltransferase 13 (B3GALT13) from Arabidopsis thaliana (Mouse-ear cress).